The primary structure comprises 683 residues: Protein kinase C eta type (683 aa).

Positions 1-118 (MSSGTMKFNG…LRTAGTSDTF (118 aa)) constitute a C2 domain. A phosphoserine mark is found at S28 and S32. 2 consecutive Phorbol-ester/DAG-type zinc fingers follow at residues 171–222 (GHKF…VTAC) and 245–295 (PHKF…APNC). S317 carries the phosphoserine modification. A Protein kinase domain is found at 355-614 (FEFIRVLGKG…EHEILRHPFF (260 aa)). ATP is bound by residues 361–369 (LGKGSFGKV) and K384. D479 serves as the catalytic Proton acceptor. Phosphothreonine; by PDPK1 is present on T513. The 69-residue stretch at 615-683 (KEIDWAQLNH…FSYVSPELQL (69 aa)) folds into the AGC-kinase C-terminal domain. A Phosphothreonine modification is found at T656. At S675 the chain carries Phosphoserine.

Belongs to the protein kinase superfamily. AGC Ser/Thr protein kinase family. PKC subfamily. Interacts with FYN. Interacts with RALA. Interacts with DGKQ. In terms of tissue distribution, predominantly expressed in lung and skin.

It is found in the cytoplasm. The enzyme catalyses L-seryl-[protein] + ATP = O-phospho-L-seryl-[protein] + ADP + H(+). It carries out the reaction L-threonyl-[protein] + ATP = O-phospho-L-threonyl-[protein] + ADP + H(+). Novel PKCs (PRKCD, PRKCE, PRKCH and PRKCQ) are calcium-insensitive, but activated by diacylglycerol (DAG) and phosphatidylserine. Three specific sites; Thr-513 (activation loop of the kinase domain), Thr-656 (turn motif) and Ser-675 (hydrophobic region), need to be phosphorylated for its full activation. Functionally, calcium-independent, phospholipid- and diacylglycerol (DAG)-dependent serine/threonine-protein kinase that is involved in the regulation of cell differentiation in keratinocytes and pre-B cell receptor, mediates regulation of epithelial tight junction integrity and foam cell formation, and is required for glioblastoma proliferation and apoptosis prevention in MCF-7 cells. In keratinocytes, binds and activates the tyrosine kinase FYN, which in turn blocks epidermal growth factor receptor (EGFR) signaling and leads to keratinocyte growth arrest and differentiation. Associates with the cyclin CCNE1-CDK2-CDKN1B complex and inhibits CDK2 kinase activity, leading to RB1 dephosphorylation and thereby G1 arrest in keratinocytes. In association with RALA activates actin depolymerization, which is necessary for keratinocyte differentiation. In the pre-B cell receptor signaling, functions downstream of BLNK by up-regulating IRF4, which in turn activates L chain gene rearrangement. Regulates epithelial tight junctions (TJs) by phosphorylating occludin (OCLN) on threonine residues, which is necessary for the assembly and maintenance of TJs. In association with PLD2 and via TLR4 signaling, is involved in lipopolysaccharide (LPS)-induced RGS2 down-regulation and foam cell formation. Upon PMA stimulation, mediates glioblastoma cell proliferation by activating the mTOR pathway, the PI3K/AKT pathway and the ERK1-dependent phosphorylation of ELK1. Involved in the protection of glioblastoma cells from irradiation-induced apoptosis by preventing caspase-9 activation. In camptothecin-treated MCF-7 cells, regulates NF-kappa-B upstream signaling by activating IKBKB, and confers protection against DNA damage-induced apoptosis. Promotes oncogenic functions of ATF2 in the nucleus while blocking its apoptotic function at mitochondria. Phosphorylates ATF2 which promotes its nuclear retention and transcriptional activity and negatively regulates its mitochondrial localization. The sequence is that of Protein kinase C eta type (Prkch) from Mus musculus (Mouse).